We begin with the raw amino-acid sequence, 881 residues long: DNA mismatch repair protein MutS (881 aa).

627 to 634 (GPNMGGKS) serves as a coordination point for ATP.

It belongs to the DNA mismatch repair MutS family.

This protein is involved in the repair of mismatches in DNA. It is possible that it carries out the mismatch recognition step. This protein has a weak ATPase activity. This chain is DNA mismatch repair protein MutS, found in Acinetobacter baumannii (strain AB307-0294).